Reading from the N-terminus, the 213-residue chain is Glutathione S-transferase DHAR2 (213 aa).

The residue at position 6 (Cys6) is an S-glutathionyl cysteine. Residues Lys8 and Asp19 each coordinate glutathione. Lys8 and Asp19 together coordinate L-ascorbate. The region spanning 10-83 (AVGAPDVLGD…DVIVGLLEEK (74 aa)) is the GST N-terminal domain. Cys20 carries the post-translational modification S-glutathionyl cysteine. The active-site Nucleophile is the Cys20. The short motif at 20-25 (CPFSQR) is the Glutathione-binding element. Glutathione contacts are provided by Lys47, Val60, Ser73, His160, and Trp207. Positions 84–213 (YPEPSLKTPP…VAGWESKVNA (130 aa)) constitute a GST C-terminal domain. Residue Lys210 coordinates L-ascorbate.

The protein belongs to the GST superfamily. DHAR family. In terms of assembly, monomer. In terms of processing, spontaneous S-glutathionylation in the presence of oxidized glutathione (GSSG).

The protein resides in the cytoplasm. It localises to the cytosol. It carries out the reaction RX + glutathione = an S-substituted glutathione + a halide anion + H(+). It catalyses the reaction L-dehydroascorbate + 2 glutathione = glutathione disulfide + L-ascorbate. Functionally, displays a dual function. As a soluble protein, exhibits glutathione-dependent thiol transferase and dehydroascorbate (DHA) reductase activities. Exhibits glutathione-dependent thiol transferase and dehydroascorbate (DHA) reductase activities. Key component of the ascorbate recycling system. Involved in the redox homeostasis, especially in scavenging of ROS under oxidative stresses. Plays a role in ozone tolerance. The polypeptide is Glutathione S-transferase DHAR2 (DHAR2) (Arabidopsis thaliana (Mouse-ear cress)).